We begin with the raw amino-acid sequence, 208 residues long: Thymidylate kinase (208 aa).

10–17 (GPEGSGKT) lines the ATP pocket.

The protein belongs to the thymidylate kinase family.

It carries out the reaction dTMP + ATP = dTDP + ADP. Its function is as follows. Phosphorylation of dTMP to form dTDP in both de novo and salvage pathways of dTTP synthesis. The chain is Thymidylate kinase from Bacillus cereus (strain ATCC 10987 / NRS 248).